The sequence spans 112 residues: Ribonuclease P protein component (112 aa).

The protein belongs to the RnpA family. In terms of assembly, consists of a catalytic RNA component (M1 or rnpB) and a protein subunit.

The catalysed reaction is Endonucleolytic cleavage of RNA, removing 5'-extranucleotides from tRNA precursor.. Its function is as follows. RNaseP catalyzes the removal of the 5'-leader sequence from pre-tRNA to produce the mature 5'-terminus. It can also cleave other RNA substrates such as 4.5S RNA. The protein component plays an auxiliary but essential role in vivo by binding to the 5'-leader sequence and broadening the substrate specificity of the ribozyme. The polypeptide is Ribonuclease P protein component (Clostridium kluyveri (strain ATCC 8527 / DSM 555 / NBRC 12016 / NCIMB 10680 / K1)).